The primary structure comprises 106 residues: UPF0060 membrane protein Mrad2831_0929 (106 aa).

A run of 4 helical transmembrane segments spans residues 3–23, 30–50, 59–79, and 87–104; these read LLAYAAAALAEIAGCFAFWAW, AWWTLPGLASLAAFAALLTLV, FAAYGGVYVAASVLWLWLAEG, and LAGSAVCLAGTALILLGR.

It belongs to the UPF0060 family.

The protein localises to the cell inner membrane. This is UPF0060 membrane protein Mrad2831_0929 from Methylobacterium radiotolerans (strain ATCC 27329 / DSM 1819 / JCM 2831 / NBRC 15690 / NCIMB 10815 / 0-1).